The primary structure comprises 408 residues: L-lactate oxidase (408 aa).

Residues Asn-14 to Tyr-370 form the FMN hydroxy acid dehydrogenase domain. Tyr-40 contributes to the pyruvate binding site. FMN-binding positions include Pro-93 to Ala-95, Ser-122, and Gln-144. Residue Tyr-146 coordinates pyruvate. Residue Thr-172 participates in FMN binding. Arg-181 serves as a coordination point for pyruvate. Residues Lys-241 and Ser-263 each contribute to the FMN site. Residues His-265 and Arg-268 each contribute to the pyruvate site. His-265 acts as the Proton acceptor in catalysis. FMN-binding positions include Asp-296–Arg-300 and Arg-320.

Belongs to the FMN-dependent alpha-hydroxy acid dehydrogenase family. In terms of assembly, homotetramer. The cofactor is FMN.

It catalyses the reaction a (2S)-2-hydroxycarboxylate + O2 = a 2-oxocarboxylate + H2O2. The catalysed reaction is (S)-lactate + O2 = pyruvate + H2O2. It carries out the reaction 2-hydroxyoctanoate + O2 = 2-oxooctanoate + H2O2. The enzyme catalyses glycolate + O2 = glyoxylate + H2O2. It catalyses the reaction mandelate + O2 = phenylglyoxylate + H2O2. The catalysed reaction is 2-hydroxyoctadecanoate + O2 = 2-oxooctadecanoate + H2O2. Functionally, oxidase that catalyzes the oxidation of a broad range of 2-hydroxyacids in vitro, such as (S)-lactate, 2-hydroxyoctanoate, and to a lesser extent glycolate, mandelate and 2-hydroxyoctadecanoate, to the corresponding 2-oxoacids, with a reduction of O2 to H2O2. May be involved in the utilization of L-lactate as an energy source for growth. The polypeptide is L-lactate oxidase (Lactobacillus jensenii).